A 47-amino-acid polypeptide reads, in one-letter code: MCGIFSKEVLSKHVDVEYRFSAEPYIGASCSNVSVLSMLCLRAKKTI.

Belongs to the YobF/DUF2527 family.

The chain is Protein YobF (yobF) from Escherichia coli O157:H7.